The primary structure comprises 1087 residues: Transcription factor AP2-Z (1087 aa).

The AP2 DNA-binding region spans 586-682; sequence GRVYKVIVRG…IKYNSVPDSL (97 aa).

The protein belongs to the AP2/ERF transcription factor family. AP2 subfamily.

It localises to the nucleus. The protein resides in the chromosome. Its function is as follows. Transcription factor which binds the 5'-[TC][AC]TG[AT]AC[AG]-3' motif. During the mosquito vector stage, plays an essential role in the zygote for de novo transcription of genes required for ookinete formation. The protein is Transcription factor AP2-Z of Plasmodium berghei (strain Anka).